A 174-amino-acid polypeptide reads, in one-letter code: Crossover junction endodeoxyribonuclease RuvC (174 aa).

Residues Asp-8, Glu-67, and Asp-139 contribute to the active site. Residues Asp-8, Glu-67, and Asp-139 each coordinate Mg(2+).

Belongs to the RuvC family. In terms of assembly, homodimer which binds Holliday junction (HJ) DNA. The HJ becomes 2-fold symmetrical on binding to RuvC with unstacked arms; it has a different conformation from HJ DNA in complex with RuvA. In the full resolvosome a probable DNA-RuvA(4)-RuvB(12)-RuvC(2) complex forms which resolves the HJ. The cofactor is Mg(2+).

Its subcellular location is the cytoplasm. The catalysed reaction is Endonucleolytic cleavage at a junction such as a reciprocal single-stranded crossover between two homologous DNA duplexes (Holliday junction).. The RuvA-RuvB-RuvC complex processes Holliday junction (HJ) DNA during genetic recombination and DNA repair. Endonuclease that resolves HJ intermediates. Cleaves cruciform DNA by making single-stranded nicks across the HJ at symmetrical positions within the homologous arms, yielding a 5'-phosphate and a 3'-hydroxyl group; requires a central core of homology in the junction. The consensus cleavage sequence is 5'-(A/T)TT(C/G)-3'. Cleavage occurs on the 3'-side of the TT dinucleotide at the point of strand exchange. HJ branch migration catalyzed by RuvA-RuvB allows RuvC to scan DNA until it finds its consensus sequence, where it cleaves and resolves the cruciform DNA. The chain is Crossover junction endodeoxyribonuclease RuvC from Pseudomonas fluorescens (strain SBW25).